Here is a 595-residue protein sequence, read N- to C-terminus: Isoprene synthase, chloroplastic (595 aa).

The N-terminal 37 residues, 1–37, are a transit peptide targeting the chloroplast; the sequence is MATELLCLHRPISLTHKLFRNPLPKVIQATPLTLKLR. Position 345 (Asp345) interacts with dimethylallyl diphosphate. Residues Asp345 and Asp349 each coordinate Mg(2+). A DDXXD motif motif is present at residues 345-349; the sequence is DDIYD. The dimethylallyl diphosphate site is built by Glu423, Arg486, and Asn489. The Mg(2+) site is built by Asn489, Ser493, and Glu497.

It belongs to the terpene synthase family. Tpsb subfamily. In terms of assembly, homodimer. It depends on Mg(2+) as a cofactor. Mn(2+) is required as a cofactor.

It localises to the plastid. The protein localises to the chloroplast. The catalysed reaction is dimethylallyl diphosphate = isoprene + diphosphate. Its pathway is secondary metabolite biosynthesis; terpenoid biosynthesis. Competitive inhibition is mediated by geranyl diphosphate (GPP). Its function is as follows. Lyase that catalyzes the formation of isoprene from dimethylallyl diphosphate via a syn-periplanar elimination mechanism in which the diphosphate-leaving group serves as a general base. The chain is Isoprene synthase, chloroplastic from Populus canescens (Grey poplar).